The chain runs to 874 residues: Alanine--tRNA ligase (874 aa).

4 residues coordinate Zn(2+): His562, His566, Cys665, and His669.

Belongs to the class-II aminoacyl-tRNA synthetase family. Zn(2+) is required as a cofactor.

Its subcellular location is the cytoplasm. The enzyme catalyses tRNA(Ala) + L-alanine + ATP = L-alanyl-tRNA(Ala) + AMP + diphosphate. Its function is as follows. Catalyzes the attachment of alanine to tRNA(Ala) in a two-step reaction: alanine is first activated by ATP to form Ala-AMP and then transferred to the acceptor end of tRNA(Ala). Also edits incorrectly charged Ser-tRNA(Ala) and Gly-tRNA(Ala) via its editing domain. This Pseudomonas fluorescens (strain Pf0-1) protein is Alanine--tRNA ligase.